The chain runs to 866 residues: Speckle targeted PIP5K1A-regulated poly(A) polymerase (866 aa).

A Matrin-type zinc finger spans residues 16-46 (FRCCLCDVTTANRPSLDAHLKGRKHRDLVQL). In terms of domain architecture, RRM spans 56-128 (RSVFVSGFPR…HTLRVRPREQ (73 aa)). The interval 116-147 (LGGHTLRVRPREQKEFQSPASKSPKGVDSNSH) is disordered. S205 contacts ATP. 2 residues coordinate Mg(2+): D216 and D218. 2 residues coordinate UTP: D216 and D218. Disordered regions lie at residues 223–249 (LGDM…STLA) and 267–321 (LSPT…EGKH). The segment covering 282-304 (TPSSLAPQTPDSALGSDTVTSPQ) has biased composition (polar residues). N393 is an ATP binding site. Residues N393, R415, Y433, and H550 each contribute to the UTP site. The 59-residue stretch at 492 to 550 (LSSLLAQFFSCVSCWDLSGSLLSLREGQALMVAGGLPSDLWEGLRLGPMNLQDPFDLSH) folds into the PAP-associated domain. Residues 599–866 (SSPSSLLSAK…IPQALKNLLK (268 aa)) are KA1; binds the bulging loops of U6 snRNA but is dispensable for terminal uridylyltransferase activity. Disordered stretches follow at residues 638–687 (QGTK…DHSE), 728–755 (EQNP…PSSV), and 773–792 (RRRF…STGA). The span at 669–687 (KSCEEGKEEPQGCAGDHSE) shows a compositional bias: basic and acidic residues. S686 and S741 each carry phosphoserine.

The protein belongs to the DNA polymerase type-B-like family. As to quaternary structure, associates with the cleavage and polyadenylation specificity factor (CPSF) complex. Interacts with CPSF1 and CPSF3; the interaction is direct. Interacts with PIP5K1A. Mg(2+) serves as cofactor. Requires Mn(2+) as cofactor. Post-translationally, phosphorylated by CK1 in the proline-rich (Pro-rich) region.

It is found in the nucleus. The protein localises to the nucleolus. Its subcellular location is the nucleus speckle. It catalyses the reaction RNA(n) + UTP = RNA(n)-3'-uridine ribonucleotide + diphosphate. The catalysed reaction is RNA(n) + ATP = RNA(n)-3'-adenine ribonucleotide + diphosphate. Adenylyltransferase activity is specifically phosphatidylinositol 4,5-bisphosphate (PtdIns(4,5)P2). In terms of biological role, poly(A) polymerase that creates the 3'-poly(A) tail of specific pre-mRNAs. Localizes to nuclear speckles together with PIP5K1A and mediates polyadenylation of a select set of mRNAs, such as HMOX1. In addition to polyadenylation, it is also required for the 3'-end cleavage of pre-mRNAs: binds to the 3'UTR of targeted pre-mRNAs and promotes the recruitment and assembly of the CPSF complex on the 3'UTR of pre-mRNAs. In addition to adenylyltransferase activity, also has uridylyltransferase activity. However, the ATP ratio is higher than UTP in cells, suggesting that it functions primarily as a poly(A) polymerase. Acts as a specific terminal uridylyltransferase for U6 snRNA in vitro: responsible for a controlled elongation reaction that results in the restoration of the four 3'-terminal UMP-residues found in newly transcribed U6 snRNA. Not involved in replication-dependent histone mRNA degradation. This chain is Speckle targeted PIP5K1A-regulated poly(A) polymerase (Tut1), found in Rattus norvegicus (Rat).